The following is a 266-amino-acid chain: Imidazole glycerol phosphate synthase subunit HisF (266 aa).

Active-site residues include Asp-11 and Asp-130.

Belongs to the HisA/HisF family. As to quaternary structure, heterodimer of HisH and HisF.

It is found in the cytoplasm. It carries out the reaction 5-[(5-phospho-1-deoxy-D-ribulos-1-ylimino)methylamino]-1-(5-phospho-beta-D-ribosyl)imidazole-4-carboxamide + L-glutamine = D-erythro-1-(imidazol-4-yl)glycerol 3-phosphate + 5-amino-1-(5-phospho-beta-D-ribosyl)imidazole-4-carboxamide + L-glutamate + H(+). The protein operates within amino-acid biosynthesis; L-histidine biosynthesis; L-histidine from 5-phospho-alpha-D-ribose 1-diphosphate: step 5/9. Its function is as follows. IGPS catalyzes the conversion of PRFAR and glutamine to IGP, AICAR and glutamate. The HisF subunit catalyzes the cyclization activity that produces IGP and AICAR from PRFAR using the ammonia provided by the HisH subunit. In Nitrosopumilus maritimus (strain SCM1), this protein is Imidazole glycerol phosphate synthase subunit HisF.